A 342-amino-acid polypeptide reads, in one-letter code: Phosphoribosylformylglycinamidine cyclo-ligase (342 aa).

The protein belongs to the AIR synthase family.

It is found in the cytoplasm. It carries out the reaction 2-formamido-N(1)-(5-O-phospho-beta-D-ribosyl)acetamidine + ATP = 5-amino-1-(5-phospho-beta-D-ribosyl)imidazole + ADP + phosphate + H(+). Its pathway is purine metabolism; IMP biosynthesis via de novo pathway; 5-amino-1-(5-phospho-D-ribosyl)imidazole from N(2)-formyl-N(1)-(5-phospho-D-ribosyl)glycinamide: step 2/2. In Staphylococcus aureus (strain bovine RF122 / ET3-1), this protein is Phosphoribosylformylglycinamidine cyclo-ligase.